Here is a 474-residue protein sequence, read N- to C-terminus: Replication factor C large subunit (474 aa).

45–52 contributes to the ATP binding site; it reads GPPGCGKT. Positions 415 to 468 are enriched in basic and acidic residues; the sequence is DKKTNNKKGKENKTKNTTKKIKEIKETPKKEEVKEPKKQIEKQKSEKKEPKKQM. Positions 415 to 474 are disordered; it reads DKKTNNKKGKENKTKNTTKKIKEIKETPKKEEVKEPKKQIEKQKSEKKEPKKQMTLESFF.

It belongs to the activator 1 small subunits family. RfcL subfamily. In terms of assembly, heteromultimer composed of small subunits (RfcS) and large subunits (RfcL).

Its function is as follows. Part of the RFC clamp loader complex which loads the PCNA sliding clamp onto DNA. This chain is Replication factor C large subunit, found in Methanococcus aeolicus (strain ATCC BAA-1280 / DSM 17508 / OCM 812 / Nankai-3).